The chain runs to 156 residues: Dihydrofolate reductase (156 aa).

Residues 1–156 (MLKLIWCQTL…VNYYSNKKEK (156 aa)) form the DHFR domain.

It belongs to the dihydrofolate reductase family.

The catalysed reaction is (6S)-5,6,7,8-tetrahydrofolate + NADP(+) = 7,8-dihydrofolate + NADPH + H(+). The protein operates within cofactor biosynthesis; tetrahydrofolate biosynthesis; 5,6,7,8-tetrahydrofolate from 7,8-dihydrofolate: step 1/1. Its function is as follows. Key enzyme in folate metabolism. Catalyzes an essential reaction for de novo glycine and purine synthesis, and for DNA precursor synthesis. The sequence is that of Dihydrofolate reductase (folA) from Ureaplasma parvum serovar 3 (strain ATCC 700970).